The chain runs to 116 residues: UPF0342 protein lhv_1666 (116 aa).

The protein belongs to the UPF0342 family.

This is UPF0342 protein lhv_1666 from Lactobacillus helveticus (strain DPC 4571).